A 221-amino-acid chain; its full sequence is Orotidine 5'-phosphate decarboxylase (221 aa).

Substrate-binding positions include Asp12, Lys34, 60–69, Ser117, 170–180, Gly193, and Arg194; these read DFKVADIPNT and PGVGAQGGKAS. The active-site Proton donor is the Lys62.

The protein belongs to the OMP decarboxylase family. Type 1 subfamily. As to quaternary structure, homodimer.

It carries out the reaction orotidine 5'-phosphate + H(+) = UMP + CO2. The protein operates within pyrimidine metabolism; UMP biosynthesis via de novo pathway; UMP from orotate: step 2/2. Its function is as follows. Catalyzes the decarboxylation of orotidine 5'-monophosphate (OMP) to uridine 5'-monophosphate (UMP). This chain is Orotidine 5'-phosphate decarboxylase, found in Methanosarcina barkeri (strain Fusaro / DSM 804).